Reading from the N-terminus, the 81-residue chain is ATP synthase subunit c (81 aa).

2 consecutive transmembrane segments (helical) span residues 6–26 (AAAS…GPGI) and 57–77 (LAFM…LLFA).

Belongs to the ATPase C chain family. In terms of assembly, F-type ATPases have 2 components, F(1) - the catalytic core - and F(0) - the membrane proton channel. F(1) has five subunits: alpha(3), beta(3), gamma(1), delta(1), epsilon(1). F(0) has four main subunits: a(1), b(1), b'(1) and c(10-14). The alpha and beta chains form an alternating ring which encloses part of the gamma chain. F(1) is attached to F(0) by a central stalk formed by the gamma and epsilon chains, while a peripheral stalk is formed by the delta, b and b' chains.

It is found in the cellular thylakoid membrane. Its function is as follows. F(1)F(0) ATP synthase produces ATP from ADP in the presence of a proton or sodium gradient. F-type ATPases consist of two structural domains, F(1) containing the extramembraneous catalytic core and F(0) containing the membrane proton channel, linked together by a central stalk and a peripheral stalk. During catalysis, ATP synthesis in the catalytic domain of F(1) is coupled via a rotary mechanism of the central stalk subunits to proton translocation. In terms of biological role, key component of the F(0) channel; it plays a direct role in translocation across the membrane. A homomeric c-ring of between 10-14 subunits forms the central stalk rotor element with the F(1) delta and epsilon subunits. The polypeptide is ATP synthase subunit c (Synechocystis sp. (strain ATCC 27184 / PCC 6803 / Kazusa)).